Consider the following 68-residue polypeptide: Sec-independent protein translocase protein TatA (68 aa).

A helical membrane pass occupies residues 1–21; that stretch reads MGSFSIWHWLIVLAVVLLLFG. The disordered stretch occupies residues 42–68; sequence GMGDDEVASADKSVDGKTVDHKSDEVR. Basic and acidic residues predominate over residues 53 to 68; the sequence is KSVDGKTVDHKSDEVR.

It belongs to the TatA/E family. In terms of assembly, the Tat system comprises two distinct complexes: a TatABC complex, containing multiple copies of TatA, TatB and TatC subunits, and a separate TatA complex, containing only TatA subunits. Substrates initially bind to the TatABC complex, which probably triggers association of the separate TatA complex to form the active translocon.

It is found in the cell inner membrane. Its function is as follows. Part of the twin-arginine translocation (Tat) system that transports large folded proteins containing a characteristic twin-arginine motif in their signal peptide across membranes. TatA could form the protein-conducting channel of the Tat system. This chain is Sec-independent protein translocase protein TatA, found in Rhizobium meliloti (strain 1021) (Ensifer meliloti).